The sequence spans 403 residues: Alkaline protease 1 (403 aa).

The first 21 residues, 1 to 21, serve as a signal peptide directing secretion; that stretch reads MQSIKRTLLLLGAILPAVLGA. Residues 22–125 constitute a propeptide that is removed on maturation; that stretch reads PVQETRRAAE…QIYYLDGLTT (104 aa). An Inhibitor I9 domain is found at 36–120; it reads KYIVTFKPGI…YVEEDQIYYL (85 aa). One can recognise a Peptidase S8 domain in the interval 130–403; that stretch reads PWGLGSISHK…PNLLAYNGNA (274 aa). Residues aspartate 162 and histidine 193 each act as charge relay system in the active site. N-linked (GlcNAc...) asparagine glycosylation occurs at asparagine 253. Serine 349 acts as the Charge relay system in catalysis.

It belongs to the peptidase S8 family.

Its subcellular location is the secreted. It catalyses the reaction Hydrolysis of proteins with broad specificity, and of Bz-Arg-OEt &gt; Ac-Tyr-OEt. Does not hydrolyze peptide amides.. In terms of biological role, secreted alkaline protease that allows assimilation of proteinaceous substrates. The sequence is that of Alkaline protease 1 (alp1) from Aspergillus flavus (strain ATCC 200026 / FGSC A1120 / IAM 13836 / NRRL 3357 / JCM 12722 / SRRC 167).